The following is a 376-amino-acid chain: N-acetyldiaminopimelate deacetylase (376 aa).

Aspartate 70 is an active-site residue. Glutamate 129 acts as the Proton acceptor in catalysis.

This sequence belongs to the peptidase M20A family. N-acetyldiaminopimelate deacetylase subfamily.

The enzyme catalyses N-acetyl-(2S,6S)-2,6-diaminopimelate + H2O = (2S,6S)-2,6-diaminopimelate + acetate. Its pathway is amino-acid biosynthesis; L-lysine biosynthesis via DAP pathway; LL-2,6-diaminopimelate from (S)-tetrahydrodipicolinate (acetylase route): step 3/3. Its function is as follows. Catalyzes the conversion of N-acetyl-diaminopimelate to diaminopimelate and acetate. The protein is N-acetyldiaminopimelate deacetylase of Bacillus pumilus (strain SAFR-032).